Here is a 209-residue protein sequence, read N- to C-terminus: Probable glutathione peroxidase 8 (209 aa).

Position 1 is an N-acetylmethionine (Met1). Residues 18-40 (VFAVLLSIVLCTVTLFLLQLKFL) form a helical membrane-spanning segment. Cys79 is a catalytic residue.

The protein belongs to the glutathione peroxidase family.

It is found in the membrane. The enzyme catalyses 2 glutathione + H2O2 = glutathione disulfide + 2 H2O. The sequence is that of Probable glutathione peroxidase 8 (GPX8) from Homo sapiens (Human).